The sequence spans 243 residues: DNA repair protein RecO (243 aa).

Belongs to the RecO family.

Involved in DNA repair and RecF pathway recombination. In Vibrio parahaemolyticus serotype O3:K6 (strain RIMD 2210633), this protein is DNA repair protein RecO.